The chain runs to 398 residues: Arginine biosynthesis bifunctional protein ArgJ (398 aa).

Substrate contacts are provided by Thr148, Lys174, Thr185, Glu271, Asn393, and Thr398. The active-site Nucleophile is Thr185.

Belongs to the ArgJ family. In terms of assembly, heterotetramer of two alpha and two beta chains.

The protein resides in the cytoplasm. It catalyses the reaction N(2)-acetyl-L-ornithine + L-glutamate = N-acetyl-L-glutamate + L-ornithine. The catalysed reaction is L-glutamate + acetyl-CoA = N-acetyl-L-glutamate + CoA + H(+). It functions in the pathway amino-acid biosynthesis; L-arginine biosynthesis; L-ornithine and N-acetyl-L-glutamate from L-glutamate and N(2)-acetyl-L-ornithine (cyclic): step 1/1. It participates in amino-acid biosynthesis; L-arginine biosynthesis; N(2)-acetyl-L-ornithine from L-glutamate: step 1/4. Functionally, catalyzes two activities which are involved in the cyclic version of arginine biosynthesis: the synthesis of N-acetylglutamate from glutamate and acetyl-CoA as the acetyl donor, and of ornithine by transacetylation between N(2)-acetylornithine and glutamate. This chain is Arginine biosynthesis bifunctional protein ArgJ, found in Listeria monocytogenes serotype 4b (strain F2365).